The chain runs to 141 residues: Drosulfakinins (141 aa).

The N-terminal stretch at 1 to 31 (MGLRRCTHFATLVMPLWALALFFLVVMQVPA) is a signal peptide. The propeptide occupies 32 to 73 (QTTSLQISKEDRRLQELESKMGAESEQPNANLVGPSISRFGD). The tract at residues 49–69 (ESKMGAESEQPNANLVGPSIS) is disordered. At F82 the chain carries Phenylalanine amide. Residues 86-111 (VPLISRPMIPIELDLLMDNDDERTKA) constitute a propeptide that is removed on maturation. At Y117 the chain carries Sulfotyrosine. F122 is modified (phenylalanine amide). Sulfotyrosine is present on Y134. F139 carries the phenylalanine amide modification.

Belongs to the gastrin/cholecystokinin family.

The protein resides in the secreted. Drosulfakinin-0 (DSK 0) plays diverse biological roles including regulating gut muscle contraction in adults but not in larvae. This chain is Drosulfakinins, found in Drosophila erecta (Fruit fly).